The primary structure comprises 205 residues: Adenylate kinase (205 aa).

10–15 is an ATP binding site; the sequence is GAGKGT. Residues 30-59 form an NMP region; sequence STGDMLRAAVAQGSEVGKVAEGIMARGELV. Residues threonine 31, arginine 36, 57 to 59, 85 to 88, and glutamine 92 contribute to the AMP site; these read ELV and GFPR. Residues 126 to 139 are LID; it reads TRAAETAGGPRADD. An ATP-binding site is contributed by arginine 127. 2 residues coordinate AMP: arginine 136 and arginine 147. Lysine 175 is an ATP binding site.

This sequence belongs to the adenylate kinase family. Monomer.

It is found in the cytoplasm. It catalyses the reaction AMP + ATP = 2 ADP. The protein operates within purine metabolism; AMP biosynthesis via salvage pathway; AMP from ADP: step 1/1. In terms of biological role, catalyzes the reversible transfer of the terminal phosphate group between ATP and AMP. Plays an important role in cellular energy homeostasis and in adenine nucleotide metabolism. In Parvibaculum lavamentivorans (strain DS-1 / DSM 13023 / NCIMB 13966), this protein is Adenylate kinase.